The following is a 239-amino-acid chain: tRNA (guanine-N(1)-)-methyltransferase (239 aa).

S-adenosyl-L-methionine is bound by residues Gly109 and 133-138; that span reads IGDYVL. Disordered regions lie at residues 163 to 187 and 217 to 239; these read PASR…YTRP and QRTR…DPGR. Basic and acidic residues-rich tracts occupy residues 165-180 and 217-226; these read SRHD…RRLE and QRTRERRPEL.

It belongs to the RNA methyltransferase TrmD family. Homodimer.

Its subcellular location is the cytoplasm. It catalyses the reaction guanosine(37) in tRNA + S-adenosyl-L-methionine = N(1)-methylguanosine(37) in tRNA + S-adenosyl-L-homocysteine + H(+). In terms of biological role, specifically methylates guanosine-37 in various tRNAs. This chain is tRNA (guanine-N(1)-)-methyltransferase, found in Mycolicibacterium paratuberculosis (strain ATCC BAA-968 / K-10) (Mycobacterium paratuberculosis).